Reading from the N-terminus, the 256-residue chain is UPF0246 protein HCH_04801 (256 aa).

The protein belongs to the UPF0246 family.

In Hahella chejuensis (strain KCTC 2396), this protein is UPF0246 protein HCH_04801.